Reading from the N-terminus, the 1304-residue chain is Probable inactive serine/threonine-protein kinase fnkC (1304 aa).

The Protein kinase domain occupies 33–402; sequence FEIIRILKKD…TNLLLTHKFI (370 aa). ATP contacts are provided by residues 39 to 47 and K68; that span reads LKKDEFSTT. A disordered region spans residues 208–277; it reads KDNNNNNNNN…EAEGGGGGGE (70 aa). Residues 210–269 show a composition bias toward low complexity; the sequence is NNNNNNNNNNNNNNNNNNNNNNNNNNNNNNANNSNNNTLNNLSIVNNNSSSSSNDNSSEA. FNIP repeat units follow at residues 514 to 556, 710 to 753, 754 to 797, 798 to 841, and 900 to 943; these read HSKS…LGSD, FNQL…FGRC, FNQP…FGSQ, YNQP…FGES, and YNDI…FGCD. MATH domains follow at residues 1025–1154 and 1172–1291; these read QGSW…RIDA and NQAF…NVSI.

This sequence belongs to the protein kinase superfamily. STE Ser/Thr protein kinase family.

The sequence is that of Probable inactive serine/threonine-protein kinase fnkC (fnkC) from Dictyostelium discoideum (Social amoeba).